Consider the following 190-residue polypeptide: Peptidyl-tRNA hydrolase (190 aa).

Tyrosine 14 is a tRNA binding site. Histidine 19 (proton acceptor) is an active-site residue. 3 residues coordinate tRNA: tyrosine 64, asparagine 66, and asparagine 112.

The protein belongs to the PTH family. In terms of assembly, monomer.

The protein resides in the cytoplasm. The enzyme catalyses an N-acyl-L-alpha-aminoacyl-tRNA + H2O = an N-acyl-L-amino acid + a tRNA + H(+). Functionally, hydrolyzes ribosome-free peptidyl-tRNAs (with 1 or more amino acids incorporated), which drop off the ribosome during protein synthesis, or as a result of ribosome stalling. Its function is as follows. Catalyzes the release of premature peptidyl moieties from peptidyl-tRNA molecules trapped in stalled 50S ribosomal subunits, and thus maintains levels of free tRNAs and 50S ribosomes. The protein is Peptidyl-tRNA hydrolase of Chlorobium phaeovibrioides (strain DSM 265 / 1930) (Prosthecochloris vibrioformis (strain DSM 265)).